We begin with the raw amino-acid sequence, 120 residues long: Glycine cleavage system H protein (120 aa).

Residues 17–99 enclose the Lipoyl-binding domain; the sequence is VATVGITEHA…QGAAWFFKLK (83 aa). An N6-lipoyllysine modification is found at K58.

It belongs to the GcvH family. As to quaternary structure, the glycine cleavage system is composed of four proteins: P, T, L and H. Requires (R)-lipoate as cofactor.

Functionally, the glycine cleavage system catalyzes the degradation of glycine. The H protein shuttles the methylamine group of glycine from the P protein to the T protein. In Sinorhizobium fredii (strain NBRC 101917 / NGR234), this protein is Glycine cleavage system H protein.